The chain runs to 258 residues: Hydroxyacylglutathione hydrolase (258 aa).

Histidine 56, histidine 58, aspartate 60, histidine 61, histidine 112, aspartate 132, and histidine 170 together coordinate Zn(2+).

The protein belongs to the metallo-beta-lactamase superfamily. Glyoxalase II family. As to quaternary structure, monomer. The cofactor is Zn(2+).

It carries out the reaction an S-(2-hydroxyacyl)glutathione + H2O = a 2-hydroxy carboxylate + glutathione + H(+). Its pathway is secondary metabolite metabolism; methylglyoxal degradation; (R)-lactate from methylglyoxal: step 2/2. Its function is as follows. Thiolesterase that catalyzes the hydrolysis of S-D-lactoyl-glutathione to form glutathione and D-lactic acid. In Pseudomonas paraeruginosa (strain DSM 24068 / PA7) (Pseudomonas aeruginosa (strain PA7)), this protein is Hydroxyacylglutathione hydrolase.